The primary structure comprises 365 residues: Cytochrome P450 71A3 (365 aa).

This sequence belongs to the cytochrome P450 family. The cofactor is heme.

In terms of biological role, may have a role in maturation, such as during flavor formation or other metabolite production specific to aging tissues. The sequence is that of Cytochrome P450 71A3 (CYP71A3) from Solanum melongena (Eggplant).